A 210-amino-acid chain; its full sequence is MEEPRHSKRPRFLAPNQASGGPPTEPGCSGVDREDPVDPVQPAKPTAYVKPMRREPPARAQPAPPAGRGQRGGGSWRAGRGRGSGAGLLRALGERVGPGMYLVHLNDHGELGYQGQLEARQTPAFSFTEAALMPGIVQEGPGPHAAQPEVGLQEPPPAPGPVAVARQTMLAPSPSLSFRPPGGSSTLCIVQTSNSTIVQSVPVFPAHSAH.

Over residues 1-11 (MEEPRHSKRPR) the composition is skewed to basic residues. Residues 1–82 (MEEPRHSKRP…GGSWRAGRGR (82 aa)) form a disordered region. The segment covering 69–82 (GQRGGGSWRAGRGR) has biased composition (gly residues).

The protein belongs to the PRR20 family.

This Homo sapiens (Human) protein is Proline-rich protein 20G.